The sequence spans 232 residues: Probable proteasome subunit alpha type-3 (232 aa).

The protein belongs to the peptidase T1A family. As to quaternary structure, the 26S proteasome consists of a 20S proteasome core and two 19S regulatory subunits. The 20S proteasome core is composed of 28 subunits that are arranged in four stacked rings, resulting in a barrel-shaped structure. The two end rings are each formed by seven alpha subunits, and the two central rings are each formed by seven beta subunits. The catalytic chamber with the active sites is on the inside of the barrel.

Its subcellular location is the cytoplasm. The protein resides in the nucleus. Functionally, the proteasome degrades poly-ubiquitinated proteins in the cytoplasm and in the nucleus. It is essential for the regulated turnover of proteins and for the removal of misfolded proteins. The proteasome is a multicatalytic proteinase complex that is characterized by its ability to cleave peptides with Arg, Phe, Tyr, Leu, and Glu adjacent to the leaving group at neutral or slightly basic pH. It has an ATP-dependent proteolytic activity. The chain is Probable proteasome subunit alpha type-3 (PRE9) from Encephalitozoon cuniculi (strain GB-M1) (Microsporidian parasite).